The following is a 318-amino-acid chain: Quinolinate synthase (318 aa).

Iminosuccinate contacts are provided by H34 and S51. C96 provides a ligand contact to [4Fe-4S] cluster. Residues 122–124 (YIN) and S139 each bind iminosuccinate. Position 182 (C182) interacts with [4Fe-4S] cluster. Residues 208 to 210 (HPE) and T225 each bind iminosuccinate. Position 275 (C275) interacts with [4Fe-4S] cluster.

Belongs to the quinolinate synthase family. Type 2 subfamily. [4Fe-4S] cluster serves as cofactor.

The protein resides in the cytoplasm. The catalysed reaction is iminosuccinate + dihydroxyacetone phosphate = quinolinate + phosphate + 2 H2O + H(+). It functions in the pathway cofactor biosynthesis; NAD(+) biosynthesis; quinolinate from iminoaspartate: step 1/1. In terms of biological role, catalyzes the condensation of iminoaspartate with dihydroxyacetone phosphate to form quinolinate. The sequence is that of Quinolinate synthase from Synechocystis sp. (strain ATCC 27184 / PCC 6803 / Kazusa).